The following is a 400-amino-acid chain: MAP kinase-activated protein kinase 2 (400 aa).

The tract at residues 1–43 (MLSNSQGQSPPVPFPAPAPPPQPPTPALPHPPAQPPPPPPQQF) is disordered. Position 9 is a phosphoserine (Ser9). Over residues 10 to 42 (PPVPFPAPAPPPQPPTPALPHPPAQPPPPPPQQ) the composition is skewed to pro residues. The residue at position 25 (Thr25) is a Phosphothreonine. The Protein kinase domain occupies 64–325 (KVTSQVLGLG…ITEFMNHPWI (262 aa)). Residues 70–78 (LGLGINGKV) and Lys93 contribute to the ATP site. 139–141 (ECL) lines the staurosporine pocket. Asp186 serves as the catalytic Proton acceptor. Thr222 carries the phosphothreonine; by MAPK14 modification. A Phosphoserine; by MAPK14 modification is found at Ser272. Ser328 carries the phosphoserine; by autocatalysis modification. Positions 328 to 364 (STKVPQTPLHTSRVLKEDKERWEDVKEEMTSALATMR) are autoinhibitory helix. The residue at position 334 (Thr334) is a Phosphothreonine; by MAPK14. Lys353 is covalently cross-linked (Glycyl lysine isopeptide (Lys-Gly) (interchain with G-Cter in SUMO)). The short motif at 356–365 (MTSALATMRV) is the Nuclear export signal (NES) element. The segment at 366-390 (DYEQIKIKKIEDASNPLLLKRRKKA) is p38 MAPK-binding site. 2 short sequence motifs (bipartite nuclear localization signal) span residues 371–374 (KIKK) and 385–389 (KRRKK).

Belongs to the protein kinase superfamily. CAMK Ser/Thr protein kinase family. As to quaternary structure, heterodimer with p38-alpha/MAPK14; this heterodimer forms a stable complex: molecules are positioned 'face to face' so that the ATP-binding sites of both kinases are at the heterodimer interface. Interacts with PHC2. Interacts with HSF1. Post-translationally, sumoylation inhibits the protein kinase activity. Phosphorylated and activated by MAP kinase p38-alpha/MAPK14 at Thr-222, Ser-272 and Thr-334. As to expression, expressed in all tissues examined.

It is found in the cytoplasm. Its subcellular location is the nucleus. It catalyses the reaction L-seryl-[protein] + ATP = O-phospho-L-seryl-[protein] + ADP + H(+). It carries out the reaction L-threonyl-[protein] + ATP = O-phospho-L-threonyl-[protein] + ADP + H(+). Activated following phosphorylation by p38-alpha/MAPK14 following various stresses. Inhibited following sumoylation. Specifically inhibited by pyrrolopyridine inhibitors. Stress-activated serine/threonine-protein kinase involved in cytokine production, endocytosis, reorganization of the cytoskeleton, cell migration, cell cycle control, chromatin remodeling, DNA damage response and transcriptional regulation. Following stress, it is phosphorylated and activated by MAP kinase p38-alpha/MAPK14, leading to phosphorylation of substrates. Phosphorylates serine in the peptide sequence, Hyd-X-R-X(2)-S, where Hyd is a large hydrophobic residue. Phosphorylates ALOX5, CDC25B, CDC25C, CEP131, ELAVL1, HNRNPA0, HSP27/HSPB1, KRT18, KRT20, LIMK1, LSP1, PABPC1, PARN, PDE4A, RCSD1, RPS6KA3, TAB3 and TTP/ZFP36. Phosphorylates HSF1; leading to the interaction with HSP90 proteins and inhibiting HSF1 homotrimerization, DNA-binding and transactivation activities. Mediates phosphorylation of HSP27/HSPB1 in response to stress, leading to the dissociation of HSP27/HSPB1 from large small heat-shock protein (sHsps) oligomers and impairment of their chaperone activities and ability to protect against oxidative stress effectively. Involved in inflammatory response by regulating tumor necrosis factor (TNF) and IL6 production post-transcriptionally: acts by phosphorylating AU-rich elements (AREs)-binding proteins ELAVL1, HNRNPA0, PABPC1 and TTP/ZFP36, leading to the regulation of the stability and translation of TNF and IL6 mRNAs. Phosphorylation of TTP/ZFP36, a major post-transcriptional regulator of TNF, promotes its binding to 14-3-3 proteins and reduces its ARE mRNA affinity, leading to inhibition of dependent degradation of ARE-containing transcripts. Phosphorylates CEP131 in response to cellular stress induced by ultraviolet irradiation which promotes binding of CEP131 to 14-3-3 proteins and inhibits formation of novel centriolar satellites. Also involved in late G2/M checkpoint following DNA damage through a process of post-transcriptional mRNA stabilization: following DNA damage, relocalizes from nucleus to cytoplasm and phosphorylates HNRNPA0 and PARN, leading to stabilization of GADD45A mRNA. Involved in toll-like receptor signaling pathway (TLR) in dendritic cells: required for acute TLR-induced macropinocytosis by phosphorylating and activating RPS6KA3. In Homo sapiens (Human), this protein is MAP kinase-activated protein kinase 2 (MAPKAPK2).